A 105-amino-acid polypeptide reads, in one-letter code: uncharacterized protein (105 aa).

This is an uncharacterized protein from Escherichia coli (strain K12).